The chain runs to 486 residues: MKLTSLRVSLLALGLVTSGFAAAETYTVDRYQDDSEKGSLRWAIEQSNANSAQENQILIQAVGKAPYVIKVDKPLPPIKSSVKIIGTEWDKTGEFIAIDGSNYIKGEGEKACPGANPGQYGTNVRTMTLPGLVLQDVNGVTLKGLDVHRFCIGVLVNRSSNNLIQHNRISNNYGGAGVMITGDDGKGNPTSTTTNNNKVLDNVFIDNGDGLELTRGAAFNLIANNLFTSTKANPEPSQGIEILWGNDNAVVGNKFENYSDGLQINWGKRNYIAYNELTNNSLGFNLTGDGNIFDSNKVHGNRIGIAIRSEKDANARITLTKNQIWDNGKDIKRCEAGGSCVPNQRLGAIVFGVPALEHEGFVGSRGGGVVIEPAKLQKTCTQPNQQNCNAIPNQGIQAPKLTVSKKQLTVEVKGTPNQRYNVEFFGNRNASSSEAEQYLGSIVVVTDHQGLAKANWAPKVSMPSVTANVTDHLGATSELSSAVKMR.

The enzyme catalyses 3-dehydroshikimate = 3,4-dihydroxybenzoate + H2O. Its pathway is aromatic compound metabolism; 3,4-dihydroxybenzoate biosynthesis; 3,4-dihydroxybenzoate from 3-dehydroquinate: step 2/2. Converts dehydroshikimate to protocatechuate. This Acinetobacter baylyi (strain ATCC 33305 / BD413 / ADP1) protein is 3-dehydroshikimate dehydratase (quiC).